A 244-amino-acid chain; its full sequence is Ribosomal RNA small subunit methyltransferase G (244 aa).

S-adenosyl-L-methionine-binding positions include G84, F89, 107 to 109 (DST), 135 to 136 (AE), and R154.

It belongs to the methyltransferase superfamily. RNA methyltransferase RsmG family.

The protein resides in the cytoplasm. In terms of biological role, specifically methylates the N7 position of a guanine in 16S rRNA. The polypeptide is Ribosomal RNA small subunit methyltransferase G (Nostoc punctiforme (strain ATCC 29133 / PCC 73102)).